The sequence spans 86 residues: Large ribosomal subunit protein bL27 (86 aa).

Positions 1–22 are disordered; it reads MATKKAGGSSRNGRDSAGRRLG.

The protein belongs to the bacterial ribosomal protein bL27 family.

The sequence is that of Large ribosomal subunit protein bL27 from Rickettsia peacockii (strain Rustic).